The primary structure comprises 311 residues: 4-diphosphocytidyl-2-C-methyl-D-erythritol kinase (311 aa).

Residue K16 is part of the active site. 100–110 (PIGAGLAGGSS) is an ATP binding site. D142 is a catalytic residue.

This sequence belongs to the GHMP kinase family. IspE subfamily.

It carries out the reaction 4-CDP-2-C-methyl-D-erythritol + ATP = 4-CDP-2-C-methyl-D-erythritol 2-phosphate + ADP + H(+). It participates in isoprenoid biosynthesis; isopentenyl diphosphate biosynthesis via DXP pathway; isopentenyl diphosphate from 1-deoxy-D-xylulose 5-phosphate: step 3/6. In terms of biological role, catalyzes the phosphorylation of the position 2 hydroxy group of 4-diphosphocytidyl-2C-methyl-D-erythritol. The protein is 4-diphosphocytidyl-2-C-methyl-D-erythritol kinase of Prochlorococcus marinus (strain MIT 9215).